Here is a 211-residue protein sequence, read N- to C-terminus: Rho-related GTP-binding protein RhoF (211 aa).

The residue at position 1 (Met-1) is an N-acetylmethionine. 26–33 contacts GTP; the sequence is GDGGCGKT. An Effector region motif is present at residues 48 to 56; sequence YAPSVFEKY. GTP-binding positions include 73–77 and 131–134; these read DTAGQ and CKTD. Cys-208 carries the cysteine methyl ester modification. Cys-208 is lipidated: S-geranylgeranyl cysteine. A propeptide spans 209-211 (removed in mature form); it reads LLL.

This sequence belongs to the small GTPase superfamily. Rho family.

Its subcellular location is the cell membrane. The protein localises to the cytoplasm. It localises to the cytoskeleton. Functionally, plasma membrane-associated small GTPase which cycles between an active GTP-bound and an inactive GDP-bound state. Causes the formation of thin, actin-rich surface projections called filopodia. Functions cooperatively with CDC42 and Rac to generate additional structures, increasing the diversity of actin-based morphology. The chain is Rho-related GTP-binding protein RhoF (Rhof) from Mus musculus (Mouse).